The sequence spans 369 residues: Chaperone protein DnaJ (369 aa).

One can recognise a J domain in the interval Ser-4–Gly-69. Residues Gly-130–Asp-207 form a CR-type zinc finger. Residues Cys-143, Cys-146, Cys-159, Cys-162, Cys-181, Cys-184, Cys-195, and Cys-198 each coordinate Zn(2+). 4 CXXCXGXG motif repeats span residues Cys-143 to Gly-150, Cys-159 to Gly-166, Cys-181 to Gly-188, and Cys-195 to Thr-202.

It belongs to the DnaJ family. As to quaternary structure, homodimer. Requires Zn(2+) as cofactor.

It is found in the cytoplasm. Its function is as follows. Participates actively in the response to hyperosmotic and heat shock by preventing the aggregation of stress-denatured proteins and by disaggregating proteins, also in an autonomous, DnaK-independent fashion. Unfolded proteins bind initially to DnaJ; upon interaction with the DnaJ-bound protein, DnaK hydrolyzes its bound ATP, resulting in the formation of a stable complex. GrpE releases ADP from DnaK; ATP binding to DnaK triggers the release of the substrate protein, thus completing the reaction cycle. Several rounds of ATP-dependent interactions between DnaJ, DnaK and GrpE are required for fully efficient folding. Also involved, together with DnaK and GrpE, in the DNA replication of plasmids through activation of initiation proteins. This is Chaperone protein DnaJ from Helicobacter pylori (strain J99 / ATCC 700824) (Campylobacter pylori J99).